We begin with the raw amino-acid sequence, 82 residues long: Ubiquinol-cytochrome-c reductase complex assembly factor 3 (82 aa).

Residues 1–6 (METVRR) lie on the Mitochondrial matrix side of the membrane. Residues 7-29 (IVKGTLLLGFCTGIGGDLWVLVA) form a helical membrane-spanning segment. The Mitochondrial intermembrane segment spans residues 30–82 (PGQERRLEMRMNYPEANPPMLAEAHKRNEMVLKVIEESAKTNENMARRSPWSS).

Belongs to the UQCC3 family. In terms of assembly, associates with the ubiquinol-cytochrome c reductase complex (mitochondrial respiratory chain complex III or cytochrome b-c1 complex).

It localises to the mitochondrion inner membrane. In terms of biological role, required for the assembly of the ubiquinol-cytochrome c reductase complex (mitochondrial respiratory chain complex III or cytochrome b-c1 complex), mediating cytochrome b recruitment and probably stabilization within the complex. Thereby, plays an important role in ATP production by mitochondria. Cardiolipin-binding protein, it may also control the cardiolipin composition of mitochondria membranes and their morphology. This Xenopus laevis (African clawed frog) protein is Ubiquinol-cytochrome-c reductase complex assembly factor 3.